The sequence spans 119 residues: Ig heavy chain V region X44 (119 aa).

In terms of domain architecture, Ig-like spans 1–117 (EVKLLESGGG…WGQGTLVTVS (117 aa)).

The protein is Ig heavy chain V region X44 of Mus musculus (Mouse).